A 439-amino-acid chain; its full sequence is Ribosomal protein uS12 methylthiotransferase RimO (439 aa).

The region spanning 5–116 (PTIAISHLGC…IVNVIERVEL (112 aa)) is the MTTase N-terminal domain. [4Fe-4S] cluster-binding residues include Cys-14, Cys-50, Cys-79, Cys-154, Cys-158, and Cys-161. The 230-residue stretch at 140–369 (TTTEGVAYLR…MELQQPISQK (230 aa)) folds into the Radical SAM core domain. The TRAM domain occupies 372 to 438 (QQEVGKIVDV…TYDLYGQVVN (67 aa)).

This sequence belongs to the methylthiotransferase family. RimO subfamily. [4Fe-4S] cluster is required as a cofactor.

Its subcellular location is the cytoplasm. It catalyses the reaction L-aspartate(89)-[ribosomal protein uS12]-hydrogen + (sulfur carrier)-SH + AH2 + 2 S-adenosyl-L-methionine = 3-methylsulfanyl-L-aspartate(89)-[ribosomal protein uS12]-hydrogen + (sulfur carrier)-H + 5'-deoxyadenosine + L-methionine + A + S-adenosyl-L-homocysteine + 2 H(+). Its function is as follows. Catalyzes the methylthiolation of an aspartic acid residue of ribosomal protein uS12. This Nostoc punctiforme (strain ATCC 29133 / PCC 73102) protein is Ribosomal protein uS12 methylthiotransferase RimO.